Here is a 334-residue protein sequence, read N- to C-terminus: MTPPVTAPYCRFEKLGASDLDGDETLLGVIEHRTGHTGVSLAEGCPRTAVHTTTREDESFAEAWHAEGPKESGSHDGVAWARTPDYLFGVARVPEGGRYAAGTAAVYTGIFDLIGTLGYPSLARTWNYVSGINTPNADGLEVYRDFCVGRAEALDARGIDPATMPAATGIGAHGGGITCYFIAARAGDRVNMENPAVLTAHRYPQRYGPRPPVFSRATWLSPPGADDGRLFVSATAGIVGHETVHHGDVAAQCEVSLENIARVIGAENLGRHGLRRGYALADVDHLKVYVRHREDISTVRRICAERLSREATVAVLHTDIARTDLLVEIEGVVA.

Substrate contacts are provided by Tyr-143, Arg-150, Tyr-203, and Arg-216. Glu-328 (proton acceptor) is an active-site residue.

It belongs to the FkbO/Hyg5 family. Monomer.

It carries out the reaction chorismate + H2O = (3R,4R)-3,4-dihydroxy-3,4-dihydrobenzoate + pyruvate. Involved in the biosynthesis of the macrocyclic amino acid-linked polyketides rapamycin which is a potent immunosuppressant that prevents T-cell proliferation through initial binding to the immunophilin FKBP12. Catalyzes the hydrolysis of chorismate via a 1,4-conjugate elimination of water to yield (4R,5R)-4,5-dihydroxycyclohexa-1,5-dienecarboxylic acid (DCDC). This Streptomyces rapamycinicus (strain ATCC 29253 / DSM 41530 / NRRL 5491 / AYB-994) (Streptomyces hygroscopicus (strain ATCC 29253)) protein is Chorismatase (rapK).